Reading from the N-terminus, the 637-residue chain is Poly(U)-binding-splicing factor hfp (637 aa).

2 stretches are compositionally biased toward basic and acidic residues: residues 1–20 (MGSN…REIS) and 28–37 (TRSDSGKSTD). The disordered stretch occupies residues 1–41 (MGSNDRASRSPRSDDQREISDMPATKRTRSDSGKSTDSKIP). 2 positions are modified to phosphoserine: S13 and S30. RRM domains lie at 130-208 (CRVY…RPSN) and 227-305 (NRIY…RSIT). One can recognise an RRM 3; atypical domain in the interval 537-627 (RVIILRNMVG…RRVVAELYDQ (91 aa)).

Belongs to the RRM half pint family. As to quaternary structure, interacts with enc. However, given the cytoplasmic localization of enc, the relevance of such interaction is unclear. As to expression, expressed in all germline cells and within the follicle cell.

It is found in the nucleus. Splicing factor that regulates oogenesis and controls both mitosis and mRNA localization in the germline by regulating mRNA splicing of a subset of genes within the ovary. Probably acts by regulating the alternative splice site selection of the otu transcript. Also regulates the alternative splicing of eIF4E1 and grk, while it is not involved in the splicing of par-1, sqd or psq. Involved in the alternative splicing of the bicistronic pre-mRNA encoding Kdm3 and CG8176; required for the efficient production of mRNA encoding Kdm3 and Kdm3-mediated regulation of rhino-dependent piRNA production. This is Poly(U)-binding-splicing factor hfp from Drosophila melanogaster (Fruit fly).